The following is a 375-amino-acid chain: 23S rRNA (uracil(747)-C(5))-methyltransferase RlmC (375 aa).

[4Fe-4S] cluster is bound by residues Cys3, Cys11, Cys14, and Cys87. Residues Gln212, Phe241, Glu262, and Asn307 each coordinate S-adenosyl-L-methionine. Cys334 (nucleophile) is an active-site residue.

This sequence belongs to the class I-like SAM-binding methyltransferase superfamily. RNA M5U methyltransferase family. RlmC subfamily.

It carries out the reaction uridine(747) in 23S rRNA + S-adenosyl-L-methionine = 5-methyluridine(747) in 23S rRNA + S-adenosyl-L-homocysteine + H(+). In terms of biological role, catalyzes the formation of 5-methyl-uridine at position 747 (m5U747) in 23S rRNA. This Serratia proteamaculans (strain 568) protein is 23S rRNA (uracil(747)-C(5))-methyltransferase RlmC.